The following is a 228-amino-acid chain: Ribose-5-phosphate isomerase A (228 aa).

Substrate is bound by residues 27–30 (TGTT), 86–89 (DGAD), and 100–103 (KGGG). The active-site Proton acceptor is the E109. K127 lines the substrate pocket.

Belongs to the ribose 5-phosphate isomerase family. As to quaternary structure, homodimer.

The catalysed reaction is aldehydo-D-ribose 5-phosphate = D-ribulose 5-phosphate. It participates in carbohydrate degradation; pentose phosphate pathway; D-ribose 5-phosphate from D-ribulose 5-phosphate (non-oxidative stage): step 1/1. Its function is as follows. Catalyzes the reversible conversion of ribose-5-phosphate to ribulose 5-phosphate. This Borrelia hermsii (strain HS1 / DAH) protein is Ribose-5-phosphate isomerase A.